The sequence spans 390 residues: Phosphopentomutase (390 aa).

Positions 11, 283, 288, 324, 325, and 336 each coordinate Mn(2+).

The protein belongs to the phosphopentomutase family. It depends on Mn(2+) as a cofactor.

The protein resides in the cytoplasm. The enzyme catalyses 2-deoxy-alpha-D-ribose 1-phosphate = 2-deoxy-D-ribose 5-phosphate. It carries out the reaction alpha-D-ribose 1-phosphate = D-ribose 5-phosphate. Its pathway is carbohydrate degradation; 2-deoxy-D-ribose 1-phosphate degradation; D-glyceraldehyde 3-phosphate and acetaldehyde from 2-deoxy-alpha-D-ribose 1-phosphate: step 1/2. Functionally, isomerase that catalyzes the conversion of deoxy-ribose 1-phosphate (dRib-1-P) and ribose 1-phosphate (Rib-1-P) to deoxy-ribose 5-phosphate (dRib-5-P) and ribose 5-phosphate (Rib-5-P), respectively. This Alkaliphilus oremlandii (strain OhILAs) (Clostridium oremlandii (strain OhILAs)) protein is Phosphopentomutase.